The chain runs to 126 residues: Probable cystatin-16 (126 aa).

The N-terminal stretch at 1–20 (MFLKATLLLGLAVLGMHVWA) is a signal peptide. Cys-84 and Cys-94 are oxidised to a cystine. The N-linked (GlcNAc...) asparagine glycan is linked to Asn-106.

The protein belongs to the cystatin family.

The protein localises to the secreted. The protein is Probable cystatin-16 of Bos taurus (Bovine).